The sequence spans 545 residues: Vicilin Pis v 3.0101 (545 aa).

The signal sequence occupies residues 1–25 (MGSRTKFCLTLFLVSVLILCAGLAL). 2 disordered regions span residues 62–93 (KEKKGREQEEEEEEEWGSGRGRGDEFSTHEPG) and 129–154 (REHSYSRDEEEEEEGDEEQEEEDENP). Over residues 82 to 93 (GRGDEFSTHEPG) the composition is skewed to basic and acidic residues. Positions 136 to 153 (DEEEEEEGDEEQEEEDEN) are enriched in acidic residues. In terms of domain architecture, Cupin type-1 2 spans 354–517 (TFNLFKKDPS…LAFKTKGEEV (164 aa)).

The protein belongs to the 7S seed storage protein family. In terms of tissue distribution, expressed in seed.

Functionally, seed storage protein. In Pistacia vera (Pistachio), this protein is Vicilin Pis v 3.0101.